A 194-amino-acid polypeptide reads, in one-letter code: Small COPII coat GTPase SAR1B (194 aa).

The STAR; SAR1-N-terminal activation recruitment. Required for the activation and subsequent recruitment to ER membrane signature appears at 2–4 (FLV). Residues 10–14 (MFLWL) are mediates recruitment to ER membranes. Residues Asn-30, Ala-31, Gly-32, Lys-33, Thr-34, and Thr-35 each coordinate GDP. Asn-30 contributes to the GTP binding site. 4 residues coordinate GTP: Gly-32, Lys-33, Thr-34, and Thr-35. Asp-70 is a binding site for Mg(2+). The GDP site is built by Lys-131, Asp-133, and Ile-172. Lys-131, Asp-133, and Ile-172 together coordinate GTP.

The protein belongs to the small GTPase superfamily. SAR1 family. In terms of assembly, homodimer; upon association with membrane. Part of the coat protein complex II/COPII, composed of SEC23/24 and SEC13/31 heterodimers, that it helps recruit and assemble on endoplasmic reticulum (ER) membranes at ER exit sites.

The protein resides in the endoplasmic reticulum membrane. Its subcellular location is the golgi apparatus. The protein localises to the golgi stack membrane. It localises to the cytoplasm. It is found in the cytosol. It catalyses the reaction GTP + H2O = GDP + phosphate + H(+). Small GTPases activation is mediated by guanine exchange factors (GEF), while inactivation through hydrolysis of the bound GTP is stimulated by GTPase activating proteins (GAP). Small GTPase that cycles between an active GTP-bound and an inactive GDP-bound state and mainly functions in vesicle-mediated endoplasmic reticulum (ER) to Golgi transport. The active GTP-bound form inserts into the endoplasmic reticulum membrane where it recruits the remainder of the coat protein complex II/COPII. The coat protein complex II assembling and polymerizing on endoplasmic reticulum membrane is responsible for both the sorting of cargos and the deformation and budding of membranes into vesicles destined to the Golgi. This is Small COPII coat GTPase SAR1B (sarB) from Dictyostelium discoideum (Social amoeba).